A 214-amino-acid chain; its full sequence is Orotate phosphoribosyltransferase (214 aa).

K26 serves as a coordination point for 5-phospho-alpha-D-ribose 1-diphosphate. Residue 34–35 (FF) coordinates orotate. 5-phospho-alpha-D-ribose 1-diphosphate-binding positions include 72–73 (YK), R99, K100, K103, H105, and 124–132 (DDVITAGTA). Orotate-binding residues include T128 and R156.

Belongs to the purine/pyrimidine phosphoribosyltransferase family. PyrE subfamily. In terms of assembly, homodimer. Mg(2+) is required as a cofactor.

It catalyses the reaction orotidine 5'-phosphate + diphosphate = orotate + 5-phospho-alpha-D-ribose 1-diphosphate. It functions in the pathway pyrimidine metabolism; UMP biosynthesis via de novo pathway; UMP from orotate: step 1/2. Its function is as follows. Catalyzes the transfer of a ribosyl phosphate group from 5-phosphoribose 1-diphosphate to orotate, leading to the formation of orotidine monophosphate (OMP). The sequence is that of Orotate phosphoribosyltransferase from Proteus mirabilis (strain HI4320).